Consider the following 103-residue polypeptide: Large ribosomal subunit protein bL21 (103 aa).

Belongs to the bacterial ribosomal protein bL21 family. As to quaternary structure, part of the 50S ribosomal subunit. Contacts protein L20.

Its function is as follows. This protein binds to 23S rRNA in the presence of protein L20. In Teredinibacter turnerae (strain ATCC 39867 / T7901), this protein is Large ribosomal subunit protein bL21.